The primary structure comprises 219 residues: MIINNQNSPQSINTPSSVSSRQHINKSKKKKENVIKRMLIRLSNSNNRSLATVFGVIGGLVLGIVLVCKEYENFPLVGKGLPLVYRIVGIFLSAGTGGNLSSYIGGTIDIITGDKTVVDLYKSFKRYFKKVKDKNHRSPIPLTNLNNNNNNNNNNNNNNNNNNNNNNNNNNNNNNNNNNNSGGSGSTDNNNNNNEPIFSNNNSNNNNDNNSDLEIPIPI.

Low complexity predominate over residues 1-17; the sequence is MIINNQNSPQSINTPSS. Residues 1-31 are disordered; the sequence is MIINNQNSPQSINTPSSVSSRQHINKSKKKK. The next 2 membrane-spanning stretches (helical) occupy residues 49-69 and 83-105; these read SLAT…LVCK and LVYR…SYIG. The disordered stretch occupies residues 135 to 219; the sequence is NHRSPIPLTN…NSDLEIPIPI (85 aa). Positions 144–212 are enriched in low complexity; that stretch reads NLNNNNNNNN…SNNNNDNNSD (69 aa).

Its subcellular location is the membrane. This is an uncharacterized protein from Dictyostelium discoideum (Social amoeba).